A 393-amino-acid polypeptide reads, in one-letter code: Cytochrome b (393 aa).

4 consecutive transmembrane segments (helical) span residues 32 to 52 (FGSL…FLAM), 76 to 98 (WLIR…LHIG), 113 to 133 (LWSI…LGYV), and 179 to 199 (FFSL…MHLL). Residues His-82 and His-96 each contribute to the heme b site. Residues His-183 and His-197 each contribute to the heme b site. His-202 is an a ubiquinone binding site. 4 helical membrane-spanning segments follow: residues 225-245 (FTFK…LFVF), 289-309 (LIGV…PILD), 321-341 (LMRF…FIGS), and 348-368 (YVEI…VVVP).

The protein belongs to the cytochrome b family. As to quaternary structure, fungal cytochrome b-c1 complex contains 10 subunits; 3 respiratory subunits, 2 core proteins and 5 low-molecular weight proteins. Cytochrome b-c1 complex is a homodimer. Heme b is required as a cofactor.

It is found in the mitochondrion inner membrane. Functionally, component of the ubiquinol-cytochrome c reductase complex (complex III or cytochrome b-c1 complex) that is part of the mitochondrial respiratory chain. The b-c1 complex mediates electron transfer from ubiquinol to cytochrome c. Contributes to the generation of a proton gradient across the mitochondrial membrane that is then used for ATP synthesis. This is Cytochrome b (COB) from Mycosarcoma maydis (Corn smut fungus).